Consider the following 501-residue polypeptide: Dynein regulatory complex subunit 5 (501 aa).

Positions Met-1–Asn-23 are enriched in polar residues. Disordered stretches follow at residues Met-1–Ala-56 and Leu-202–Glu-222. The span at Ser-24 to Ser-34 shows a compositional bias: low complexity. 5 LRR repeats span residues Val-308–Asp-321, Arg-335–Ala-355, Asn-363–Ala-383, Cys-391–Ser-411, and Thr-419–Leu-439.

The protein belongs to the DRC5 family. As to quaternary structure, component of the nexin-dynein regulatory complex (N-DRC). Interacts with DRC1. Interacts with FBXL13/DRC6, DRC3 and DRC7.

It is found in the cell projection. The protein localises to the cilium. Its subcellular location is the flagellum. It localises to the cytoplasm. The protein resides in the cytoskeleton. It is found in the flagellum axoneme. In terms of biological role, component of the nexin-dynein regulatory complex (N-DRC) a key regulator of ciliary/flagellar motility which maintains the alignment and integrity of the distal axoneme and regulates microtubule sliding in motile axonemes. May play a role in the assembly of N-DRC. May be required for sperm motility. This chain is Dynein regulatory complex subunit 5 (TCTE1), found in Homo sapiens (Human).